Consider the following 292-residue polypeptide: Glutamyl-Q tRNA(Asp) synthetase (292 aa).

L-glutamate contacts are provided by residues 9–13 and E45; that span reads RFAPS. Residues 12–22 carry the 'HIGH' region motif; it reads PSPSGPLHAGS. The Zn(2+) site is built by C99, C101, Y121, and C125. Residues Y184 and R202 each contribute to the L-glutamate site. A 'KMSKS' region motif is present at residues 240 to 244; sequence KLSKQ. Residue K243 coordinates ATP.

It belongs to the class-I aminoacyl-tRNA synthetase family. GluQ subfamily. Requires Zn(2+) as cofactor.

Functionally, catalyzes the tRNA-independent activation of glutamate in presence of ATP and the subsequent transfer of glutamate onto a tRNA(Asp). Glutamate is transferred on the 2-amino-5-(4,5-dihydroxy-2-cyclopenten-1-yl) moiety of the queuosine in the wobble position of the QUC anticodon. The protein is Glutamyl-Q tRNA(Asp) synthetase of Verminephrobacter eiseniae (strain EF01-2).